We begin with the raw amino-acid sequence, 752 residues long: Probable GTP-binding protein OBGC1, chloroplastic (752 aa).

Residues 1 to 90 (MAPAVAVVAA…RFPTANPEPR (90 aa)) constitute a chloroplast transit peptide. The segment at 19–121 (FSAEARRNTK…EEDEVELGLR (103 aa)) is disordered. The span at 26–36 (NTKGSRSKRGS) shows a compositional bias: basic residues. Acidic residues predominate over residues 103-117 (GDDEEDEEEEEDEVE). Residues 294–452 (MRCFDTAKIY…MWIDLELKLV (159 aa)) form the Obg domain. The OBG-type G domain occupies 453–621 (ADVGIVGAPN…VVLAAYKVLQ (169 aa)). GTP is bound by residues 459 to 466 (GAPNAGKS), 484 to 488 (FTTLL), 506 to 509 (DLPG), 573 to 576 (NKMD), and 602 to 604 (SAM). The Mg(2+) site is built by Ser-466 and Thr-486. One can recognise an OCT domain in the interval 649–728 (ERRAPMNEFE…VGEMEMVWTD (80 aa)). The segment at 728-752 (DEPSKTRSSKTMNSKDDSVRWPEFG) is disordered. Over residues 740–752 (NSKDDSVRWPEFG) the composition is skewed to basic and acidic residues.

Belongs to the TRAFAC class OBG-HflX-like GTPase superfamily. OBG GTPase family. Mg(2+) serves as cofactor.

It localises to the plastid. The protein localises to the chloroplast. Functionally, probable GTP-binding protein that may play a role in chloroplast development. The sequence is that of Probable GTP-binding protein OBGC1, chloroplastic (OBGC1) from Oryza sativa subsp. indica (Rice).